The primary structure comprises 380 residues: DNA replication and repair protein RecF (380 aa).

30–37 (GENAQGKT) is a binding site for ATP.

The protein belongs to the RecF family.

Its subcellular location is the cytoplasm. Its function is as follows. The RecF protein is involved in DNA metabolism; it is required for DNA replication and normal SOS inducibility. RecF binds preferentially to single-stranded, linear DNA. It also seems to bind ATP. The sequence is that of DNA replication and repair protein RecF from Synechococcus sp. (strain JA-3-3Ab) (Cyanobacteria bacterium Yellowstone A-Prime).